The following is a 145-amino-acid chain: Sperm mitochondrial-associated cysteine-rich protein (145 aa).

Phosphoserine occurs at positions 38, 45, 113, and 131. Residues 105-145 (CSSENKTESDSDGSGQTQDRGAQTQQSPQGGQGNWNQKKTK) are disordered. The segment covering 116–145 (DGSGQTQDRGAQTQQSPQGGQGNWNQKKTK) has biased composition (polar residues).

In terms of tissue distribution, testis. Selectively expressed in the spermatids of seminiferous tubules and in flagella of epididymal sperm.

It localises to the cytoplasm. The protein localises to the mitochondrion membrane. Functionally, involved in sperm motility. Its absence is associated with genetic background dependent male infertility. Infertility may be due to reduced sperm motility in the female reproductive tract and inability to penetrate the oocyte zona pellucida. The sequence is that of Sperm mitochondrial-associated cysteine-rich protein (Smcp) from Rattus norvegicus (Rat).